Consider the following 125-residue polypeptide: Holo-[acyl-carrier-protein] synthase (125 aa).

D8 and E57 together coordinate Mg(2+).

Belongs to the P-Pant transferase superfamily. AcpS family. Requires Mg(2+) as cofactor.

It is found in the cytoplasm. The enzyme catalyses apo-[ACP] + CoA = holo-[ACP] + adenosine 3',5'-bisphosphate + H(+). Functionally, transfers the 4'-phosphopantetheine moiety from coenzyme A to a Ser of acyl-carrier-protein. In Halothermothrix orenii (strain H 168 / OCM 544 / DSM 9562), this protein is Holo-[acyl-carrier-protein] synthase.